A 405-amino-acid polypeptide reads, in one-letter code: Endo-1,4-beta-xylanase 5 (405 aa).

An N-terminal signal peptide occupies residues 1 to 22 (MTRLATLITLAGLLAVSPGAYA). Residues asparagine 27 and asparagine 69 are each glycosylated (N-linked (GlcNAc...) asparagine). The GH10 domain maps to 32 to 352 (STGAEGLNSL…KPAYTSVSSL (321 aa)). Glutamate 166 acts as the Proton donor in catalysis. A glycan (N-linked (GlcNAc...) asparagine) is linked at asparagine 171. Glutamate 273 (nucleophile) is an active-site residue. Cysteine 302 and cysteine 308 are joined by a disulfide. A lipid anchor (GPI-anchor amidated glycine) is attached at glycine 380. Positions 381 to 405 (AGRETVSIAGLTLALSSLAFGMFML) are cleaved as a propeptide — removed in mature form.

It belongs to the glycosyl hydrolase 10 (cellulase F) family.

The protein localises to the cell membrane. The protein resides in the secreted. It carries out the reaction Endohydrolysis of (1-&gt;4)-beta-D-xylosidic linkages in xylans.. Its pathway is glycan degradation; xylan degradation. Its function is as follows. Endo-1,4-beta-xylanase involved in the hydrolysis of xylan, a major structural heterogeneous polysaccharide found in plant biomass representing the second most abundant polysaccharide in the biosphere, after cellulose. The polypeptide is Endo-1,4-beta-xylanase 5 (XYL5) (Pyricularia grisea (Crabgrass-specific blast fungus)).